A 401-amino-acid polypeptide reads, in one-letter code: Imidazolonepropionase (401 aa).

His70 and His72 together coordinate Fe(3+). Residues His70 and His72 each contribute to the Zn(2+) site. The 4-imidazolone-5-propanoate site is built by Arg79, Tyr142, and His175. Position 142 (Tyr142) interacts with N-formimidoyl-L-glutamate. His238 contacts Fe(3+). Residue His238 coordinates Zn(2+). Residue Gln241 participates in 4-imidazolone-5-propanoate binding. Residue Asp313 participates in Fe(3+) binding. Residue Asp313 coordinates Zn(2+). Residues Asn315 and Gly317 each coordinate N-formimidoyl-L-glutamate. Residue Thr318 participates in 4-imidazolone-5-propanoate binding.

It belongs to the metallo-dependent hydrolases superfamily. HutI family. Requires Zn(2+) as cofactor. It depends on Fe(3+) as a cofactor.

The protein resides in the cytoplasm. It carries out the reaction 4-imidazolone-5-propanoate + H2O = N-formimidoyl-L-glutamate. The protein operates within amino-acid degradation; L-histidine degradation into L-glutamate; N-formimidoyl-L-glutamate from L-histidine: step 3/3. Its function is as follows. Catalyzes the hydrolytic cleavage of the carbon-nitrogen bond in imidazolone-5-propanoate to yield N-formimidoyl-L-glutamate. It is the third step in the universal histidine degradation pathway. This is Imidazolonepropionase from Xanthomonas axonopodis pv. citri (strain 306).